The primary structure comprises 80 residues: Acyl carrier protein (80 aa).

In terms of domain architecture, Carrier spans 1 to 79 (MSQEEILQKV…DAVKFIEAKK (79 aa)). Serine 39 is modified (O-(pantetheine 4'-phosphoryl)serine).

It belongs to the acyl carrier protein (ACP) family. Post-translationally, 4'-phosphopantetheine is transferred from CoA to a specific serine of apo-ACP by AcpS. This modification is essential for activity because fatty acids are bound in thioester linkage to the sulfhydryl of the prosthetic group.

The protein localises to the cytoplasm. Its pathway is lipid metabolism; fatty acid biosynthesis. In terms of biological role, carrier of the growing fatty acid chain in fatty acid biosynthesis. This chain is Acyl carrier protein, found in Prochlorococcus marinus (strain MIT 9515).